The following is a 187-amino-acid chain: Adenine phosphoribosyltransferase (187 aa).

133-137 (ATGGS) is a binding site for AMP.

Belongs to the purine/pyrimidine phosphoribosyltransferase family. As to quaternary structure, homodimer. Mg(2+) is required as a cofactor.

It localises to the cytoplasm. The protein localises to the nucleus. The catalysed reaction is AMP + diphosphate = 5-phospho-alpha-D-ribose 1-diphosphate + adenine. The protein operates within purine metabolism; AMP biosynthesis via salvage pathway; AMP from adenine: step 1/1. Catalyzes a salvage reaction resulting in the formation of AMP, that is energically less costly than de novo synthesis. In Eremothecium gossypii (strain ATCC 10895 / CBS 109.51 / FGSC 9923 / NRRL Y-1056) (Yeast), this protein is Adenine phosphoribosyltransferase (APT1).